Consider the following 51-residue polypeptide: Defensin-like protein 2A (51 aa).

At Q1 the chain carries Pyrrolidone carboxylic acid. 4 disulfide bridges follow: C4–C51, C15–C36, C21–C45, and C25–C47. Phosphoserine; by CPK is present on S8.

As to quaternary structure, forms oligomers in its native state.

Possesses antifungal activity sensitive to inorganic cations. The protein is Defensin-like protein 2A of Sinapis alba (White mustard).